A 923-amino-acid chain; its full sequence is Alanine--tRNA ligase (923 aa).

H614, H618, C717, and H721 together coordinate Zn(2+). Residues K884–A903 form a disordered region. Over residues V885 to P901 the composition is skewed to gly residues.

The protein belongs to the class-II aminoacyl-tRNA synthetase family. It depends on Zn(2+) as a cofactor.

It is found in the cytoplasm. The catalysed reaction is tRNA(Ala) + L-alanine + ATP = L-alanyl-tRNA(Ala) + AMP + diphosphate. Functionally, catalyzes the attachment of alanine to tRNA(Ala) in a two-step reaction: alanine is first activated by ATP to form Ala-AMP and then transferred to the acceptor end of tRNA(Ala). Also edits incorrectly charged Ser-tRNA(Ala) and Gly-tRNA(Ala) via its editing domain. This Haloquadratum walsbyi (strain DSM 16790 / HBSQ001) protein is Alanine--tRNA ligase.